The following is a 34-amino-acid chain: MSDIN-like toxin proprotein 5 (34 aa).

The propeptide occupies 1-10 (MSDINTARLP). The segment at residues 11-20 (YVVFMSFIPP) is a cross-link (cyclopeptide (Tyr-Pro)). Positions 21–34 (CVNDDIQVVLTRGE) are excised as a propeptide.

Belongs to the MSDIN fungal toxin family. Post-translationally, processed by the macrocyclase-peptidase enzyme POPB to yield a toxic cyclic decapeptide. POPB first removes 10 residues from the N-terminus. Conformational trapping of the remaining peptide forces the enzyme to release this intermediate rather than proceed to macrocyclization. The enzyme rebinds the remaining peptide in a different conformation and catalyzes macrocyclization of the N-terminal 10 residues.

Functionally, probable toxin that belongs to the MSDIN-like toxin family responsible for a large number of food poisoning cases and deaths. In Amanita bisporigera (Destroying angel), this protein is MSDIN-like toxin proprotein 5.